Consider the following 436-residue polypeptide: Testican-3 (436 aa).

Positions 1–22 (MLKVSAVLCVCAAAWCSQSLAA) are cleaved as a signal peptide. 8 disulfide bridges follow: C90–C101, C95–C111, C139–C169, C142–C162, C151–C183, C317–C341, C352–C359, and C361–C380. In terms of domain architecture, Kazal-like spans 133 to 185 (GPILSTCKQCPVVYPSPVCGSDGHTYSFQCKLEYQACVLGKQISVKCEGHCPC). The 67-residue stretch at 314-380 (DPPCQTELSN…GSRINGVADC (67 aa)) folds into the Thyroglobulin type-1 domain. O-linked (Xyl...) (glycosaminoglycan) serine glycans are attached at residues S387 and S392. The interval 393 to 436 (GDFHEWTDDEDDEDDIMNDEDEIEDDDEDEGDDDDGGDDHDGYI) is disordered. Over residues 399 to 430 (TDDEDDEDDIMNDEDEIEDDDEDEGDDDDGGD) the composition is skewed to acidic residues.

In terms of processing, contains chondroitin sulfate and heparan sulfate O-linked oligosaccharides. As to expression, expressed in brain.

The protein resides in the secreted. The protein localises to the extracellular space. It localises to the extracellular matrix. Functionally, may participate in diverse steps of neurogenesis. Inhibits the processing of pro-matrix metalloproteinase 2 (MMP-2) by MT1-MMP and MT3-MMP. May interfere with tumor invasion. This chain is Testican-3 (SPOCK3), found in Pongo abelii (Sumatran orangutan).